Consider the following 58-residue polypeptide: Probable U-exon protein (58 aa).

The protein is Probable U-exon protein of Snake adenovirus serotype 1 (SnAdV-1).